Here is a 238-residue protein sequence, read N- to C-terminus: Large ribosomal subunit protein uL2 (238 aa).

The disordered stretch occupies residues 200–238 (HGGGLHQSVSRPSTVSRNAPPGRKVGHIAARRTGRKEGK). Polar residues predominate over residues 206 to 216 (QSVSRPSTVSR). Basic residues predominate over residues 223-238 (KVGHIAARRTGRKEGK).

It belongs to the universal ribosomal protein uL2 family. Part of the 50S ribosomal subunit. Forms a bridge to the 30S subunit in the 70S ribosome.

In terms of biological role, one of the primary rRNA binding proteins. Required for association of the 30S and 50S subunits to form the 70S ribosome, for tRNA binding and peptide bond formation. It has been suggested to have peptidyltransferase activity; this is somewhat controversial. Makes several contacts with the 16S rRNA in the 70S ribosome. The sequence is that of Large ribosomal subunit protein uL2 from Saccharolobus islandicus (strain L.S.2.15 / Lassen #1) (Sulfolobus islandicus).